Here is a 171-residue protein sequence, read N- to C-terminus: Early E1A protein (171 aa).

The tract at residues 40 to 48 (PTLHDLFDV) is interaction with RB1 in competition with E2F1. Residues 67-96 (DTDSSASTEGDSGFSPLSTPPVSPIPPHPT) form a disordered region. Residues 84 to 96 (STPPVSPIPPHPT) show a composition bias toward pro residues. The LXCXE motif, interaction with host RB1 motif lies at 106–110 (LLCLE). A zinc finger spans residues 145–163 (CLRCAFYQEQDDNALCGLC). Residues 166-171 (KGPCRR) carry the Nuclear localization signal motif.

Belongs to the adenoviridae E1A protein family. As to quaternary structure, interacts with host UBE2I; this interaction interferes with polySUMOylation. Interacts with host RB1; this interaction induces the aberrant dissociation of RB1-E2F1 complex thereby disrupting the activity of RB1 and activating E2F1-regulated genes. Interacts with host ATF7; the interaction enhances ATF7-mediated viral transactivation activity which requires the zinc binding domains of both proteins. Isoform early E1A 32 kDa protein and isoform early E1A 26 kDa protein interact (via N-terminus) with CUL1 and E3 ubiquitin ligase RBX1; these interactions inhibit RBX1-CUL1-dependent elongation reaction of ubiquitin chains and attenuate ubiquitination of SCF(FBXW7) target proteins. Interacts (via PXLXP motif) with host ZMYND11/BS69 (via MYND-type zinc finger); this interaction inhibits E1A mediated transactivation. Interacts with host EP300; this interaction stimulates the acetylation of RB1 by recruiting EP300 and RB1 into a multimeric-protein complex. Interacts with host CTBP1 and CTBP2; this interaction seems to potentiate viral replication. Interacts with host DCAF7. Interacts with host DYRK1A. Interacts with host KPNA4; this interaction allows E1A import into the host nucleus. Interacts with host EP400; this interaction stabilizes MYC. Interacts with host TBP protein; this interaction probably disrupts the TBP-TATA complex.

Its subcellular location is the host nucleus. Its function is as follows. Plays a role in viral genome replication by driving entry of quiescent cells into the cell cycle. Stimulation of progression from G1 to S phase allows the virus to efficiently use the cellular DNA replicating machinery to achieve viral genome replication. E1A protein has both transforming and trans-activating activities. Induces the disassembly of the E2F1 transcription factor from RB1 by direct competition for the same binding site on RB1, with subsequent transcriptional activation of E2F1-regulated S-phase genes and of the E2 region of the adenoviral genome. Release of E2F1 leads to the ARF-mediated inhibition of MDM2 and causes TP53/p53 to accumulate because it is not targeted for degradation by MDM2-mediated ubiquitination anymore. This increase in TP53, in turn, would arrest the cell proliferation and direct its death but this effect is counteracted by the viral protein E1B-55K. Inactivation of the ability of RB1 to arrest the cell cycle is critical for cellular transformation, uncontrolled cellular growth and proliferation induced by viral infection. Interaction with RBX1 and CUL1 inhibits ubiquitination of the proteins targeted by SCF(FBXW7) ubiquitin ligase complex, and may be linked to unregulated host cell proliferation. The tumorigenesis-restraining activity of E1A may be related to the disruption of the host CtBP-CtIP complex through the CtBP binding motif. In Canis lupus familiaris (Dog), this protein is Early E1A protein.